A 63-amino-acid chain; its full sequence is MANPKAKMSKSRRDKRRAQFNARTKPVTTVNCPNCGEPTLPHRACRHCGHYRGRAVTGKTANG.

Residues 1–27 (MANPKAKMSKSRRDKRRAQFNARTKPV) form a disordered region. Basic residues predominate over residues 7–18 (KMSKSRRDKRRA).

The protein belongs to the bacterial ribosomal protein bL32 family.

This chain is Large ribosomal subunit protein bL32, found in Chlorobium phaeobacteroides (strain DSM 266 / SMG 266 / 2430).